A 344-amino-acid polypeptide reads, in one-letter code: Phenylalanine--tRNA ligase alpha subunit (344 aa).

Residue glutamate 259 participates in Mg(2+) binding.

This sequence belongs to the class-II aminoacyl-tRNA synthetase family. Phe-tRNA synthetase alpha subunit type 1 subfamily. In terms of assembly, tetramer of two alpha and two beta subunits. Requires Mg(2+) as cofactor.

It is found in the cytoplasm. The catalysed reaction is tRNA(Phe) + L-phenylalanine + ATP = L-phenylalanyl-tRNA(Phe) + AMP + diphosphate + H(+). The chain is Phenylalanine--tRNA ligase alpha subunit from Petrotoga mobilis (strain DSM 10674 / SJ95).